The sequence spans 353 residues: tRNA N6-adenosine threonylcarbamoyltransferase (353 aa).

Residues His115 and His119 each coordinate Fe cation. Substrate is bound by residues 138-142 (LVSGG), Asp171, Gly184, and Asn276. Asp304 lines the Fe cation pocket.

The protein belongs to the KAE1 / TsaD family. Fe(2+) serves as cofactor.

Its subcellular location is the cytoplasm. The catalysed reaction is L-threonylcarbamoyladenylate + adenosine(37) in tRNA = N(6)-L-threonylcarbamoyladenosine(37) in tRNA + AMP + H(+). Its function is as follows. Required for the formation of a threonylcarbamoyl group on adenosine at position 37 (t(6)A37) in tRNAs that read codons beginning with adenine. Is involved in the transfer of the threonylcarbamoyl moiety of threonylcarbamoyl-AMP (TC-AMP) to the N6 group of A37, together with TsaE and TsaB. TsaD likely plays a direct catalytic role in this reaction. This is tRNA N6-adenosine threonylcarbamoyltransferase from Xanthomonas euvesicatoria pv. vesicatoria (strain 85-10) (Xanthomonas campestris pv. vesicatoria).